Reading from the N-terminus, the 95-residue chain is MAVKIRLTRMGSKKKPFYRINVADSRSPRDGRFIETVGTYNPLVAENQVTLKEDRVLAWLANGAQPSDTVRNILSKEGVLKKSTILNSQNKFKVG.

The protein belongs to the bacterial ribosomal protein bS16 family.

The chain is Small ribosomal subunit protein bS16 from Streptococcus pneumoniae (strain CGSP14).